The following is a 906-amino-acid chain: Translation initiation factor IF-2 (906 aa).

Disordered regions lie at residues 134-250 (RQRN…GSHV) and 269-317 (HLSA…FERP). Residues 136–177 (RNLDEQQRLAESDRVRDEEIQRKRDEEQAAKDRAEAERKAAE) are compositionally biased toward basic and acidic residues. Low complexity-rich tracts occupy residues 178–232 (EAAA…STPA) and 287–305 (GRPG…RGSN). The 170-residue stretch at 405–574 (TRPPVVTIMG…SLQAEVLELK (170 aa)) folds into the tr-type G domain. The G1 stretch occupies residues 414–421 (GHVDHGKT). Position 414-421 (414-421 (GHVDHGKT)) interacts with GTP. The interval 439 to 443 (GITQH) is G2. Residues 460–463 (DTPG) form a G3 region. GTP-binding positions include 460–464 (DTPGH) and 514–517 (NKID). The G4 stretch occupies residues 514–517 (NKID). The G5 stretch occupies residues 550 to 552 (SAK).

The protein belongs to the TRAFAC class translation factor GTPase superfamily. Classic translation factor GTPase family. IF-2 subfamily.

It localises to the cytoplasm. Its function is as follows. One of the essential components for the initiation of protein synthesis. Protects formylmethionyl-tRNA from spontaneous hydrolysis and promotes its binding to the 30S ribosomal subunits. Also involved in the hydrolysis of GTP during the formation of the 70S ribosomal complex. The sequence is that of Translation initiation factor IF-2 from Xanthomonas oryzae pv. oryzae (strain MAFF 311018).